Consider the following 491-residue polypeptide: Probable CtpA-like serine protease (491 aa).

The interval 1-22 (MNDHQKNHATSQDDNTKSTPSK) is disordered. The span at 8–22 (HATSQDDNTKSTPSK) shows a compositional bias: polar residues. A helical membrane pass occupies residues 31–51 (LWHFILVILGIILLTSIITVV). Residues 119–201 (TKQFNEGVSG…TYVTLTIKRG (83 aa)) enclose the PDZ domain. Active-site charge relay system residues include serine 324, aspartate 335, and lysine 349.

This sequence belongs to the peptidase S41A family.

The protein localises to the cell membrane. The chain is Probable CtpA-like serine protease from Staphylococcus epidermidis (strain ATCC 12228 / FDA PCI 1200).